The following is a 365-amino-acid chain: A-type ATP synthase subunit C (365 aa).

It belongs to the V-ATPase V0D/AC39 subunit family. In terms of assembly, has multiple subunits with at least A(3), B(3), C, D, E, F, H, I and proteolipid K(x).

The protein resides in the cell membrane. Functionally, component of the A-type ATP synthase that produces ATP from ADP in the presence of a proton gradient across the membrane. This chain is A-type ATP synthase subunit C, found in Thermococcus kodakarensis (strain ATCC BAA-918 / JCM 12380 / KOD1) (Pyrococcus kodakaraensis (strain KOD1)).